The primary structure comprises 1113 residues: StAR-related lipid transfer protein 13 (1113 aa).

Methionine 1 bears the N-acetylmethionine mark. Residues 55–122 (QQEIEAKEAC…LNKCASMRLD (68 aa)) enclose the SAM domain. Disordered stretches follow at residues 164-218 (PVAD…HSAD), 230-256 (SSLPQSTREGLNQSFHPKNEKPTRTRA), and 308-343 (NGDLQTSPPAACRKGLPCSSKSSGESSPLENSSTVS). Positions 179-188 (NTASSESVLT) are enriched in polar residues. The span at 197–214 (SIHSESSGGSDSRSQSGH) shows a compositional bias: low complexity. Polar residues predominate over residues 230–245 (SSLPQSTREGLNQSFH). Residues 322–340 (GLPCSSKSSGESSPLENSS) show a composition bias toward low complexity. Phosphoserine is present on serine 411. 2 stretches are compositionally biased toward polar residues: residues 421–435 (SNGVNWRTGSISLGR) and 529–549 (PNQVTLDFEGNSVSEGRTTPS). 2 disordered regions span residues 421-443 (SNGVNWRTGSISLGRQQGPGMRE) and 514-578 (HSTL…GASL). The region spanning 663–868 (VPLIVHVQRT…HMITECNRLF (206 aa)) is the Rho-GAP domain. The START domain maps to 899–1109 (LAESGATFHT…SFQPLVAEGP (211 aa)).

Homodimer. Interacts with TAX1BP1.

It is found in the cytoplasm. The protein resides in the membrane. It localises to the mitochondrion membrane. The protein localises to the lipid droplet. Its function is as follows. May function as a GTPase-activating protein. In Mus musculus (Mouse), this protein is StAR-related lipid transfer protein 13 (Stard13).